Consider the following 908-residue polypeptide: NADH-quinone oxidoreductase subunit G (908 aa).

The region spanning 2–83 (ATIHVDGKEY…GTFISIDDEE (82 aa)) is the 2Fe-2S ferredoxin-type domain. Positions 34, 45, 48, and 67 each coordinate [2Fe-2S] cluster. A 4Fe-4S His(Cys)3-ligated-type domain is found at 83-122 (EAKQFRESVVEWLMTNHPHDCPVCEEGGNCHLQDMTVMTG). [4Fe-4S] cluster-binding residues include H99, C103, C106, C112, C151, C154, C157, C201, C228, C231, C235, and C263. One can recognise a 4Fe-4S Mo/W bis-MGD-type domain in the interval 221–277 (MQFAPSICQQCSIGCNISPGERYGELRRIENRYNGTVNHYFLCDRGRFGYGYVNLKD).

The protein belongs to the complex I 75 kDa subunit family. Composed of 13 different subunits. Subunits NuoCD, E, F, and G constitute the peripheral sector of the complex. Requires [2Fe-2S] cluster as cofactor. [4Fe-4S] cluster serves as cofactor.

The catalysed reaction is a quinone + NADH + 5 H(+)(in) = a quinol + NAD(+) + 4 H(+)(out). Its function is as follows. NDH-1 shuttles electrons from NADH, via FMN and iron-sulfur (Fe-S) centers, to quinones in the respiratory chain. The immediate electron acceptor for the enzyme in this species is believed to be ubiquinone. Couples the redox reaction to proton translocation (for every two electrons transferred, four hydrogen ions are translocated across the cytoplasmic membrane), and thus conserves the redox energy in a proton gradient. The sequence is that of NADH-quinone oxidoreductase subunit G (nuoG) from Shigella flexneri.